Consider the following 237-residue polypeptide: Ribosomal RNA small subunit methyltransferase G (237 aa).

S-adenosyl-L-methionine is bound by residues G78, F83, 129-130 (AE), and R148. The tract at residues 218 to 237 (KKETPNKYPRKAGMPNKRPL) is disordered.

The protein belongs to the methyltransferase superfamily. RNA methyltransferase RsmG family.

The protein resides in the cytoplasm. Its function is as follows. Specifically methylates the N7 position of a guanine in 16S rRNA. The chain is Ribosomal RNA small subunit methyltransferase G from Streptococcus sanguinis (strain SK36).